A 196-amino-acid chain; its full sequence is Holliday junction branch migration complex subunit RuvA (196 aa).

The domain I stretch occupies residues 1–62; sequence MYEYINGLIT…ENDISLYGFI (62 aa). The tract at residues 63 to 141 is domain II; the sequence is DADEKALFNK…ELASKTGMVD (79 aa). A flexible linker region spans residues 142-148; the sequence is SSSNPEQ. The domain III stretch occupies residues 148–196; it reads QSQALDDALEALLALGYTAKDVKAVAQIIGRNSDTTDGYIRSALKLLVK.

This sequence belongs to the RuvA family. Homotetramer. Forms an RuvA(8)-RuvB(12)-Holliday junction (HJ) complex. HJ DNA is sandwiched between 2 RuvA tetramers; dsDNA enters through RuvA and exits via RuvB. An RuvB hexamer assembles on each DNA strand where it exits the tetramer. Each RuvB hexamer is contacted by two RuvA subunits (via domain III) on 2 adjacent RuvB subunits; this complex drives branch migration. In the full resolvosome a probable DNA-RuvA(4)-RuvB(12)-RuvC(2) complex forms which resolves the HJ.

It is found in the cytoplasm. The RuvA-RuvB-RuvC complex processes Holliday junction (HJ) DNA during genetic recombination and DNA repair, while the RuvA-RuvB complex plays an important role in the rescue of blocked DNA replication forks via replication fork reversal (RFR). RuvA specifically binds to HJ cruciform DNA, conferring on it an open structure. The RuvB hexamer acts as an ATP-dependent pump, pulling dsDNA into and through the RuvAB complex. HJ branch migration allows RuvC to scan DNA until it finds its consensus sequence, where it cleaves and resolves the cruciform DNA. This is Holliday junction branch migration complex subunit RuvA from Leuconostoc mesenteroides subsp. mesenteroides (strain ATCC 8293 / DSM 20343 / BCRC 11652 / CCM 1803 / JCM 6124 / NCDO 523 / NBRC 100496 / NCIMB 8023 / NCTC 12954 / NRRL B-1118 / 37Y).